The following is a 291-amino-acid chain: Taste receptor type 2 member 16 (291 aa).

A topological domain (extracellular) is located at residue methionine 1. Residues 2 to 22 (IPIQLTVFFMIIYVLESLTII) traverse the membrane as a helical segment. Residues 23–41 (VQSSLIVAVLGREWLQVRR) lie on the Cytoplasmic side of the membrane. The chain crosses the membrane as a helical span at residues 42–62 (LMPVDMILISLGISRFCLQWA). Over 63 to 84 (SMLNNFCSYLNLNYVLCNLTIT) the chain is Extracellular. Asparagine 80 is a glycosylation site (N-linked (GlcNAc...) asparagine). A helical membrane pass occupies residues 85-105 (WEFFNILTFWLNSLLTVFYCI). At 106–125 (KVSSFTHHIFLWVRWRILRW) the chain is on the cytoplasmic side. The chain crosses the membrane as a helical span at residues 126-146 (FPWILLGSLTIACVTIIPSAI). Over 147–182 (GNYIQIQLLTMEHLPRNSTVTDRLEKFHQYQFQSHT) the chain is Extracellular. Asparagine 163 carries an N-linked (GlcNAc...) asparagine glycan. Residues 183 to 203 (VALVIPFILFLASTILLMASL) traverse the membrane as a helical segment. Residues 204-228 (TKQIQHHSTGHCNPSMKAHFTALRS) are Cytoplasmic-facing. The chain crosses the membrane as a helical span at residues 229–249 (LAILFIVFTSYFLIILITIIG). Over 250–257 (TLFDKRCW) the chain is Extracellular. The chain crosses the membrane as a helical span at residues 258–278 (LWVWEAFVYAFILMHSTSLML). The Cytoplasmic portion of the chain corresponds to 279-291 (SSPTLKRILKGKC).

This sequence belongs to the G-protein coupled receptor T2R family. As to quaternary structure, interacts with RTP3 and RTP4.

Its subcellular location is the cell membrane. Its function is as follows. Receptor that may play a role in the perception of bitterness and is gustducin-linked. May function as a bitter taste receptor for the phytonutrient beta glucopyranosides, some of which are toxic and some of which lower the risk of cancer and cardiovascular disease. The activity of this receptor may stimulate alpha gustducin, mediate PLC-beta-2 activation and lead to the gating of TRPM5. The polypeptide is Taste receptor type 2 member 16 (TAS2R16) (Pongo pygmaeus (Bornean orangutan)).